The following is a 444-amino-acid chain: Phosphoglucosamine mutase (444 aa).

Catalysis depends on Ser103, which acts as the Phosphoserine intermediate. The Mg(2+) site is built by Ser103, Asp242, Asp244, and Asp246. Ser103 carries the post-translational modification Phosphoserine.

It belongs to the phosphohexose mutase family. Requires Mg(2+) as cofactor. In terms of processing, activated by phosphorylation.

It carries out the reaction alpha-D-glucosamine 1-phosphate = D-glucosamine 6-phosphate. Functionally, catalyzes the conversion of glucosamine-6-phosphate to glucosamine-1-phosphate. The chain is Phosphoglucosamine mutase from Hydrogenovibrio crunogenus (strain DSM 25203 / XCL-2) (Thiomicrospira crunogena).